The following is a 228-amino-acid chain: Ribosomal RNA large subunit methyltransferase E (228 aa).

5 residues coordinate S-adenosyl-L-methionine: G76, W78, D99, D115, and D139. The active-site Proton acceptor is the K179.

It belongs to the class I-like SAM-binding methyltransferase superfamily. RNA methyltransferase RlmE family.

Its subcellular location is the cytoplasm. It catalyses the reaction uridine(2552) in 23S rRNA + S-adenosyl-L-methionine = 2'-O-methyluridine(2552) in 23S rRNA + S-adenosyl-L-homocysteine + H(+). Its function is as follows. Specifically methylates the uridine in position 2552 of 23S rRNA at the 2'-O position of the ribose in the fully assembled 50S ribosomal subunit. This is Ribosomal RNA large subunit methyltransferase E from Nitrobacter hamburgensis (strain DSM 10229 / NCIMB 13809 / X14).